Here is an 808-residue protein sequence, read N- to C-terminus: Probable potassium transporter 3 (808 aa).

At 1–34 the chain is on the cytoplasmic side; sequence MPVADCESGLSPADVTGAGAANGNPGHWRSYYRH. The chain crosses the membrane as a helical span at residues 35 to 55; it reads VLLLAYQSCGVVYGDLSTSPL. Residues 56–81 are Extracellular-facing; it reads YVYKSTFIIGSLRRFQDEEIVFGVFS. A helical membrane pass occupies residues 82–102; that stretch reads LVFWTLTLIPLLKYVFIVLAA. Over 103–167 the chain is Cytoplasmic; that stretch reads DDNGEGGTFA…FLENHRKSRT (65 aa). A helical membrane pass occupies residues 168–188; that stretch reads FLLVTVLFGASLVIGDGVLTP. The Extracellular portion of the chain corresponds to 189–204; the sequence is PMSVLSSFSGLQVHST. Residues 205–225 traverse the membrane as a helical segment; that stretch reads ALTSGEVEILSCTVLVCLFMV. Topologically, residues 226-232 are cytoplasmic; the sequence is QHWGTHR. A helical transmembrane segment spans residues 233-253; it reads VAFLFAPVVIVWLLLLGALGV. At 254–283 the chain is on the extracellular side; that stretch reads YNIVVWNPRVLRALSPYYLVRFFQHTGKDG. Residues 284–304 form a helical membrane-spanning segment; the sequence is WISLGGILLSMTGTEAMYADL. At 305–313 the chain is on the cytoplasmic side; sequence GHFTAASIR. The helical transmembrane segment at 314–334 threads the bilayer; the sequence is VAFVGLIYPCLVLQYMGQAAF. At 335–354 the chain is on the extracellular side; it reads LSKSPHCDIHFVFFESIPTG. A helical membrane pass occupies residues 355–375; it reads IFWPVLVIATLAAIVGSQAVI. At 376-406 the chain is on the cytoplasmic side; sequence SATFSIVRQCTALGCFPRVKIVHTSRRIHGQ. A helical transmembrane segment spans residues 407–427; it reads IYSPEINWILMLLCIAVTMGL. The Extracellular portion of the chain corresponds to 428–439; sequence RDTTLIGNAYGM. A helical transmembrane segment spans residues 440 to 460; that stretch reads ACAGVMLVTTLLMALVIVFVW. Over 461-464 the chain is Cytoplasmic; sequence QYSC. The helical transmembrane segment at 465–485 threads the bilayer; sequence LVAALFLVAFGVVEAVYLSAA. Over 486–491 the chain is Extracellular; it reads LMKVPQ. Residues 492–512 traverse the membrane as a helical segment; it reads GGWLPLVLSLVFVAVMYVWHY. The Cytoplasmic segment spans residues 513-808; the sequence is GTRRKHQFDV…LIEVGMIYYV (296 aa).

This sequence belongs to the HAK/KUP transporter (TC 2.A.72.3) family.

Its subcellular location is the membrane. Functionally, high-affinity potassium transporter. The chain is Probable potassium transporter 3 (HAK3) from Oryza sativa subsp. japonica (Rice).